We begin with the raw amino-acid sequence, 380 residues long: Putative 8-amino-7-oxononanoate synthase (380 aa).

Arg-18 contributes to the substrate binding site. Residue 105 to 106 participates in pyridoxal 5'-phosphate binding; the sequence is GY. Residue His-130 coordinates substrate. Pyridoxal 5'-phosphate-binding positions include Ser-178, 204 to 207, and 235 to 238; these read DEAH and TFGK. An N6-(pyridoxal phosphate)lysine modification is found at Lys-238. Thr-352 is a binding site for substrate.

This sequence belongs to the class-II pyridoxal-phosphate-dependent aminotransferase family. BioF subfamily. Homodimer. Requires pyridoxal 5'-phosphate as cofactor.

It catalyses the reaction 6-carboxyhexanoyl-[ACP] + L-alanine + H(+) = (8S)-8-amino-7-oxononanoate + holo-[ACP] + CO2. Its pathway is cofactor biosynthesis; biotin biosynthesis. Its function is as follows. Catalyzes the decarboxylative condensation of pimeloyl-[acyl-carrier protein] and L-alanine to produce 8-amino-7-oxononanoate (AON), [acyl-carrier protein], and carbon dioxide. The sequence is that of Putative 8-amino-7-oxononanoate synthase (bioF) from Glaesserella parasuis serovar 5 (strain SH0165) (Haemophilus parasuis).